We begin with the raw amino-acid sequence, 255 residues long: Thiazole synthase (255 aa).

The active-site Schiff-base intermediate with DXP is Lys96. 1-deoxy-D-xylulose 5-phosphate-binding positions include Gly157, Ala183–Gly184, and Asn205–Ser206.

The protein belongs to the ThiG family. In terms of assembly, homotetramer. Forms heterodimers with either ThiH or ThiS.

It localises to the cytoplasm. The catalysed reaction is [ThiS sulfur-carrier protein]-C-terminal-Gly-aminoethanethioate + 2-iminoacetate + 1-deoxy-D-xylulose 5-phosphate = [ThiS sulfur-carrier protein]-C-terminal Gly-Gly + 2-[(2R,5Z)-2-carboxy-4-methylthiazol-5(2H)-ylidene]ethyl phosphate + 2 H2O + H(+). It functions in the pathway cofactor biosynthesis; thiamine diphosphate biosynthesis. Catalyzes the rearrangement of 1-deoxy-D-xylulose 5-phosphate (DXP) to produce the thiazole phosphate moiety of thiamine. Sulfur is provided by the thiocarboxylate moiety of the carrier protein ThiS. In vitro, sulfur can be provided by H(2)S. In Exiguobacterium sibiricum (strain DSM 17290 / CCUG 55495 / CIP 109462 / JCM 13490 / 255-15), this protein is Thiazole synthase.